The sequence spans 272 residues: HMP-PP phosphatase (272 aa).

The active-site Nucleophile is D8. Residues D8, D10, and D212 each contribute to the Mg(2+) site.

This sequence belongs to the HAD-like hydrolase superfamily. Cof family. It depends on Mg(2+) as a cofactor.

It carries out the reaction 4-amino-2-methyl-5-(diphosphooxymethyl)pyrimidine + H2O = 4-amino-2-methyl-5-(phosphooxymethyl)pyrimidine + phosphate + H(+). Functionally, catalyzes the hydrolysis of 4-amino-2-methyl-5-hydroxymethylpyrimidine pyrophosphate (HMP-PP) to 4-amino-2-methyl-5-hydroxymethylpyrimidine phosphate (HMP-P). The sequence is that of HMP-PP phosphatase from Enterobacter sp. (strain 638).